We begin with the raw amino-acid sequence, 57 residues long: UPF0391 membrane protein Nwi_2359 (57 aa).

2 helical membrane-spanning segments follow: residues tryptophan 4–alanine 24 and isoleucine 30–phenylalanine 50.

Belongs to the UPF0391 family.

It localises to the cell membrane. This Nitrobacter winogradskyi (strain ATCC 25391 / DSM 10237 / CIP 104748 / NCIMB 11846 / Nb-255) protein is UPF0391 membrane protein Nwi_2359.